The following is a 622-amino-acid chain: ATP-dependent lipid A-core flippase (622 aa).

5 helical membrane passes run 32 to 52 (IVAALIAIFGVAATESYLAAF), 91 to 111 (VWGTENKIWTVPLFLIILVVI), 192 to 212 (IVLLYLNWQLSLIVVLMFPLL), 286 to 306 (SPFSELIASIALAVVIFIALW), and 312 to 332 (YTTIGEFMAFIVAMLQMYAPI). The region spanning 33 to 344 (VAALIAIFGV…LANISIPMQT (312 aa)) is the ABC transmembrane type-1 domain. The region spanning 378-611 (FRNVDVEYRS…NGYYTMLRNI (234 aa)) is the ABC transporter domain. 410–417 (GRSGSGKS) contacts ATP.

The protein belongs to the ABC transporter superfamily. Lipid exporter (TC 3.A.1.106) family. Homodimer.

The protein resides in the cell inner membrane. It carries out the reaction ATP + H2O + lipid A-core oligosaccharideSide 1 = ADP + phosphate + lipid A-core oligosaccharideSide 2.. Functionally, involved in lipopolysaccharide (LPS) biosynthesis. Translocates lipid A-core from the inner to the outer leaflet of the inner membrane. Transmembrane domains (TMD) form a pore in the inner membrane and the ATP-binding domain (NBD) is responsible for energy generation. The protein is ATP-dependent lipid A-core flippase of Neisseria gonorrhoeae (strain ATCC 700825 / FA 1090).